A 135-amino-acid polypeptide reads, in one-letter code: uncharacterized protein (135 aa).

The next 4 helical transmembrane spans lie at Ile4 to Gly24, Trp26 to Ile46, Leu68 to Trp88, and Leu93 to Leu113.

It belongs to the bacteriophage holin family. Cp-1 holin subfamily.

It localises to the cell membrane. This is an uncharacterized protein from Clostridium perfringens (strain 13 / Type A).